We begin with the raw amino-acid sequence, 365 residues long: Putative clathrin assembly protein At4g40080 (365 aa).

Positions 29 to 167 (NTKSKTLSFH…STSRIMGFFI (139 aa)) constitute an ENTH domain.

It localises to the membrane. The protein localises to the clathrin-coated pit. Its subcellular location is the golgi apparatus. It is found in the cytoplasmic vesicle. The protein resides in the clathrin-coated vesicle. The chain is Putative clathrin assembly protein At4g40080 from Arabidopsis thaliana (Mouse-ear cress).